Here is a 314-residue protein sequence, read N- to C-terminus: Olfactory receptor 11H7 (314 aa).

Topologically, residues 1–24 (MNNSQISTVTQFVLLGFPGPWKIQ) are extracellular. A glycan (N-linked (GlcNAc...) asparagine) is linked at Asn-2. The helical transmembrane segment at 25 to 45 (IIFFSMILLVYIFTLTGNMAI) threads the bilayer. The Cytoplasmic segment spans residues 46-57 (ICAVRWDHRLHT). A helical transmembrane segment spans residues 58-78 (PMYVLLANFSFLEIWYVTCTV). Residues 79-97 (PNMLVNFFSKTKTISFSGC) lie on the Extracellular side of the membrane. A disulfide bridge connects residues Cys-97 and Cys-179. Residues 98–118 (FTQFHFFFSLGTTECFFLCVM) form a helical membrane-spanning segment. At 119–142 (AYDRYLAICHPLHYPSIMTGQLCG) the chain is on the cytoplasmic side. A helical transmembrane segment spans residues 143-163 (ILVSLCWLIGFLGHSISIFFI). Topologically, residues 164–201 (FQLPFCGPNIIDHFLCDVDPLMALSSAPTHIIGHVFHS) are extracellular. Residues 202-222 (VSSLFINLTMVYILGSYTLVL) form a helical membrane-spanning segment. The Cytoplasmic segment spans residues 223–244 (RTVLQVPSSAGWQKAISTCGSH). A helical membrane pass occupies residues 245-265 (LVVVSLFYGAIMLMYVSPTPG). The Extracellular segment spans residues 266 to 271 (NSVAMH). The chain crosses the membrane as a helical span at residues 272 to 292 (KLITLIYSVVTPVLNPLIYSL). Residues 293–314 (RNKDMKYALHHVFCGMRIIQRS) are Cytoplasmic-facing.

This sequence belongs to the G-protein coupled receptor 1 family.

The protein resides in the cell membrane. In terms of biological role, odorant receptor. Activated by isovaleric acid. The chain is Olfactory receptor 11H7 (OR11H7) from Homo sapiens (Human).